Reading from the N-terminus, the 90-residue chain is E22 protein (90 aa).

This is E22 protein (43) from Bacillus subtilis (Bacteriophage SP01).